A 635-amino-acid polypeptide reads, in one-letter code: MEEKPNYVIQVEEELPTLLRKATTEEMVGFDNYKENGHPFPHSISRFHPSHASTTTLNGQETSRSIDTMEAHHHNYNETTPWTHQRKPSISMPTSPNVLMISDPTTSLSSENHKNSGSTGKSVKFLSQPMTKVSSLYIESGNGDDDRRQSHDNHHHHLHRQHQSGHHQNQNQAANKLKDNRYNSFKTWSGKLERQFTRKPASVEPEAPNRNNQNLNTNEAMPVDRYYDALEGPELETLRPQEEIVLPNDKKWPFLLRYPISTFGMCLGVSSQAIMWKTLATAEPTKFLHVPLWINQGLWFISVALILTIATIYLLKIILFFEAVRREYYHPIRINFFFAPFISLLFLALGVPPSIITDLPHFLWYLLMFPFICLELKIYGQWMSGGQRRLSRVANPTNHLSVVGNFVGALLGASMGLREGPIFFYAVGMAHYLVLFVTLYQRLPTNETLPKDLHPVFFLFVAAPSVASMAWAKVTGSFDYGSKVCYFIAIFLYFSLAVRINFFRGIKFSLSWWAYTFPMTGAAIATIRYATVVKSTMTQIMCVVLCAIATLVVFALLVTTIIHAFVLRDLFPNDLAIAISNRPRPKQNSQHRWLDQLRNVSSENIENYLKFTDSDSSQSNDVEACNGKTQESDSS.

Residues 1-253 (MEEKPNYVIQ…IVLPNDKKWP (253 aa)) are Cytoplasmic-facing. The segment covering 102–121 (SDPTTSLSSENHKNSGSTGK) has biased composition (polar residues). The interval 102–173 (SDPTTSLSSE…SGHHQNQNQA (72 aa)) is disordered. The span at 153–165 (NHHHHLHRQHQSG) shows a compositional bias: basic residues. Ser189 is subject to Phosphoserine. The interval 193–217 (ERQFTRKPASVEPEAPNRNNQNLNT) is disordered. The chain crosses the membrane as a helical span at residues 254–276 (FLLRYPISTFGMCLGVSSQAIMW). The Extracellular portion of the chain corresponds to 277-299 (KTLATAEPTKFLHVPLWINQGLW). Residues 300–320 (FISVALILTIATIYLLKIILF) form a helical membrane-spanning segment. At 321–335 (FEAVRREYYHPIRIN) the chain is on the cytoplasmic side. The helical transmembrane segment at 336 to 356 (FFFAPFISLLFLALGVPPSII) threads the bilayer. Over 357-358 (TD) the chain is Extracellular. The helical transmembrane segment at 359-379 (LPHFLWYLLMFPFICLELKIY) threads the bilayer. At 380–396 (GQWMSGGQRRLSRVANP) the chain is on the cytoplasmic side. Residues 397-417 (TNHLSVVGNFVGALLGASMGL) traverse the membrane as a helical segment. Residues 418–419 (RE) are Extracellular-facing. A helical transmembrane segment spans residues 420–440 (GPIFFYAVGMAHYLVLFVTLY). The Cytoplasmic portion of the chain corresponds to 441 to 455 (QRLPTNETLPKDLHP). A helical membrane pass occupies residues 456–476 (VFFLFVAAPSVASMAWAKVTG). Residue Ser477 is a topological domain, extracellular. Residues 478–498 (FDYGSKVCYFIAIFLYFSLAV) form a helical membrane-spanning segment. Topologically, residues 499–504 (RINFFR) are cytoplasmic. Residues 505–525 (GIKFSLSWWAYTFPMTGAAIA) form a helical membrane-spanning segment. Topologically, residues 526-541 (TIRYATVVKSTMTQIM) are extracellular. The helical transmembrane segment at 542–562 (CVVLCAIATLVVFALLVTTII) threads the bilayer. Residues 563–635 (HAFVLRDLFP…NGKTQESDSS (73 aa)) lie on the Cytoplasmic side of the membrane. The interval 611–635 (FTDSDSSQSNDVEACNGKTQESDSS) is disordered. A compositionally biased stretch (polar residues) spans 614–635 (SDSSQSNDVEACNGKTQESDSS).

The protein belongs to the SLAC1 S-type anion channel family. In terms of assembly, homotrimer. Interacts with KAT1. As to expression, expressed in the whole plant, escpecially in vascular systems.

Its subcellular location is the cell membrane. Its function is as follows. Slow, weak voltage-dependent S-type anion efflux channel involved in maintenance of anion homeostasis. Binds to the highly selective inward-rectifying potassium channel KAT1 and inhibits its activity. Functions as an essential negative regulator of inward potassium channels in guard cells. Essential for the efficient stomatal closure and opening in guard cells. In Arabidopsis thaliana (Mouse-ear cress), this protein is S-type anion channel SLAH3 (SLAH3).